We begin with the raw amino-acid sequence, 484 residues long: BPI fold-containing family B member 1 (484 aa).

A signal peptide spans 1-21 (MAGPWTFTLLCGLLAATLIQA). Residue Asn-48 is glycosylated (N-linked (GlcNAc...) asparagine). A disulfide bridge connects residues Cys-158 and Cys-201. Asn-264 and Asn-401 each carry an N-linked (GlcNAc...) asparagine glycan.

It belongs to the BPI/LBP/Plunc superfamily. Plunc family. Detected in duodenum mucosal crypts of cholera patients, near Paneth cells (at protein level). Detected in trachea, nasal septal epithelium and lung.

The protein localises to the secreted. May play a role in innate immunity in mouth, nose and lungs. Binds bacterial lipopolysaccharide (LPS) and modulates the cellular responses to LPS. The polypeptide is BPI fold-containing family B member 1 (BPIFB1) (Homo sapiens (Human)).